Here is a 340-residue protein sequence, read N- to C-terminus: Biotin synthase (340 aa).

Positions 45 to 272 (NAVQVSTLLS…ASYVRLSAGR (228 aa)) constitute a Radical SAM core domain. 3 residues coordinate [4Fe-4S] cluster: Cys-60, Cys-64, and Cys-67. Residues Cys-104, Cys-135, Cys-195, and Arg-267 each coordinate [2Fe-2S] cluster.

This sequence belongs to the radical SAM superfamily. Biotin synthase family. In terms of assembly, homodimer. [4Fe-4S] cluster is required as a cofactor. Requires [2Fe-2S] cluster as cofactor.

It carries out the reaction (4R,5S)-dethiobiotin + (sulfur carrier)-SH + 2 reduced [2Fe-2S]-[ferredoxin] + 2 S-adenosyl-L-methionine = (sulfur carrier)-H + biotin + 2 5'-deoxyadenosine + 2 L-methionine + 2 oxidized [2Fe-2S]-[ferredoxin]. Its pathway is cofactor biosynthesis; biotin biosynthesis; biotin from 7,8-diaminononanoate: step 2/2. Catalyzes the conversion of dethiobiotin (DTB) to biotin by the insertion of a sulfur atom into dethiobiotin via a radical-based mechanism. This chain is Biotin synthase, found in Thioalkalivibrio sulfidiphilus (strain HL-EbGR7).